The sequence spans 304 residues: Vacuolar protein sorting-associated protein 26C (304 aa).

The protein belongs to the VPS26 family. Component of the commander complex that is essential for endosomal recycling of transmembrane cargos; the commander complex is composed of the CCC subcomplex and the retriever subcomplex. Component of the heterotrimeric retriever complex consisting of vps26c, vps29 and vps35l; within the complex interacts with vps35l. Interacts with snx17 (via C-terminus); the interaction is direct and associates snx17 with the retriever complex. Interacts with snx31; the interaction is direct.

It is found in the endosome. Functionally, component of the commander complex that is essential for endosomal recycling of transmembrane cargos; the commander complex is composed of the CCC subcomplex and the retriever subcomplex. Component of the retriever complex, which is a heterotrimeric complex related to retromer cargo-selective complex (CSC) and essential for retromer-independent retrieval and recycling of numerous cargos such as integrin alpha-5/beta-1 (ITGA5:ITGB1). The recruitment of the retriever complex to the endosomal membrane involves CCC and WASH complexes. In the endosomes, drives the retriever and recycling of NxxY-motif-containing cargo proteins by coupling to snx17, a cargo essential for the homeostatic maintenance of numerous cell surface proteins associated with processes that include cell migration, cell adhesion, nutrient supply and cell signaling. In Dictyostelium discoideum (Social amoeba), this protein is Vacuolar protein sorting-associated protein 26C (vps26c).